A 313-amino-acid polypeptide reads, in one-letter code: Extracellular metalloprotease (313 aa).

A signal peptide spans 1–34; sequence MKLVPRFRKQWFAYLTVLCLALAAAVSFGVPAKA. The segment at 35-74 is disordered; sequence AENPQTSVSNTGKEADATKNQTSKADQVSAPYEGTGKTSK. A propeptide spanning residues 35-93 is cleaved from the precursor; that stretch reads AENPQTSVSNTGKEADATKNQTSKADQVSAPYEGTGKTSKSLYGGQTELEKNIQTLQPS. The segment covering 37–60 has biased composition (polar residues); that stretch reads NPQTSVSNTGKEADATKNQTSKAD. A disulfide bond links Cys-131 and Cys-147. Residues His-146 and Ser-267 each act as charge relay system in the active site.

This sequence belongs to the peptidase S1B family. Monomer.

It localises to the secreted. In Bacillus subtilis (strain 168), this protein is Extracellular metalloprotease (mpr).